Here is a 102-residue protein sequence, read N- to C-terminus: Small ribosomal subunit protein uS10 (102 aa).

This sequence belongs to the universal ribosomal protein uS10 family. Part of the 30S ribosomal subunit.

Functionally, involved in the binding of tRNA to the ribosomes. The protein is Small ribosomal subunit protein uS10 of Syntrophus aciditrophicus (strain SB).